A 528-amino-acid chain; its full sequence is Probable rhamnogalacturonate lyase A (528 aa).

The signal sequence occupies residues 1 to 20 (MFFQTGLLLSLSLWTKVAYA). 2 disulfide bridges follow: Cys50/Cys93 and Cys184/Cys193. Asn56 carries N-linked (GlcNAc...) asparagine glycosylation. An N-linked (GlcNAc...) asparagine glycan is attached at Asn351.

The protein belongs to the polysaccharide lyase 4 family.

The protein localises to the secreted. It carries out the reaction Endotype eliminative cleavage of L-alpha-rhamnopyranosyl-(1-&gt;4)-alpha-D-galactopyranosyluronic acid bonds of rhamnogalacturonan I domains in ramified hairy regions of pectin leaving L-rhamnopyranose at the reducing end and 4-deoxy-4,5-unsaturated D-galactopyranosyluronic acid at the non-reducing end.. Pectinolytic enzymes consist of four classes of enzymes: pectin lyase, polygalacturonase, pectin methylesterase and rhamnogalacturonase. Degrades the rhamnogalacturonan I (RG-I) backbone of pectin. Active against linseed rhamnogalacturonan. The protein is Probable rhamnogalacturonate lyase A (rglA) of Aspergillus clavatus (strain ATCC 1007 / CBS 513.65 / DSM 816 / NCTC 3887 / NRRL 1 / QM 1276 / 107).